Consider the following 336-residue polypeptide: Tetraacyldisaccharide 4'-kinase (336 aa).

60-67 (TIGGTGKT) contacts ATP.

This sequence belongs to the LpxK family.

The catalysed reaction is a lipid A disaccharide + ATP = a lipid IVA + ADP + H(+). It functions in the pathway glycolipid biosynthesis; lipid IV(A) biosynthesis; lipid IV(A) from (3R)-3-hydroxytetradecanoyl-[acyl-carrier-protein] and UDP-N-acetyl-alpha-D-glucosamine: step 6/6. Functionally, transfers the gamma-phosphate of ATP to the 4'-position of a tetraacyldisaccharide 1-phosphate intermediate (termed DS-1-P) to form tetraacyldisaccharide 1,4'-bis-phosphate (lipid IVA). This Pseudomonas putida (strain W619) protein is Tetraacyldisaccharide 4'-kinase.